Here is a 230-residue protein sequence, read N- to C-terminus: Spliceosome-associated protein CWC15 homolog (230 aa).

2 disordered regions span residues 1–157 (MTTA…EEKQ) and 164–183 (AGNP…GGDF). A compositionally biased stretch (polar residues) spans 25-34 (KLSNQYSSKD). Coiled-coil stretches lie at residues 47-82 (GQET…SASS) and 119-164 (DSDE…NILA). The segment covering 52 to 78 (ADLRKKDLRRELEDKERNAIREKRARD) has biased composition (basic and acidic residues). The span at 104-125 (DADEAVDELNSSDDDDSDEDDT) shows a compositional bias: acidic residues. The segment covering 131-157 (ELEKIKKERAEEKAARDEEIKEKEEKQ) has biased composition (basic and acidic residues).

It belongs to the CWC15 family. Component of spliceosomal complex.

The protein localises to the nucleus. In terms of biological role, component of a spliceosomal complex that is required for activating pre-mRNA splicing. The sequence is that of Spliceosome-associated protein CWC15 homolog from Caenorhabditis elegans.